Consider the following 320-residue polypeptide: Malate dehydrogenase (320 aa).

NAD(+) is bound by residues 10–15 (GAGQIG) and Asp-34. Substrate contacts are provided by Arg-83 and Arg-89. NAD(+)-binding positions include Asn-96 and 119 to 121 (ITN). Asn-121 and Arg-152 together coordinate substrate. Catalysis depends on His-176, which acts as the Proton acceptor.

The protein belongs to the LDH/MDH superfamily. MDH type 3 family.

The enzyme catalyses (S)-malate + NAD(+) = oxaloacetate + NADH + H(+). Functionally, catalyzes the reversible oxidation of malate to oxaloacetate. The polypeptide is Malate dehydrogenase (Methylobacterium sp. (strain 4-46)).